Here is a 42-residue protein sequence, read N- to C-terminus: VQHPPKIQVYSRHPAZBGKPBFLBCYVSGFHPXZIZIBLLKB.

Positions 5–42 constitute an Ig-like C1-type domain; that stretch reads PKIQVYSRHPAZBGKPBFLBCYVSGFHPXZIZIBLLKB.

Heterodimer of an alpha chain and a beta chain. Beta-2-microglobulin is the beta-chain of major histocompatibility complex class I molecules.

It is found in the secreted. In terms of biological role, component of the class I major histocompatibility complex (MHC). Involved in the presentation of peptide antigens to the immune system. The chain is Beta-2-microglobulin (B2M) from Canis lupus familiaris (Dog).